Reading from the N-terminus, the 928-residue chain is Retinoblastoma-associated protein (928 aa).

Residues 1-42 (MPPKTPRKTAATAAAAAAEPPAPPPPPPPEEDPEQDSGPEDL) are disordered. P2 bears the N,N-dimethylproline mark. Residues 8-19 (KTAATAAAAAAE) are compositionally biased toward low complexity. Acidic residues predominate over residues 29 to 39 (PEEDPEQDSGP). Phosphoserine is present on S37. A Phosphoserine; by CDK1 modification is found at S249. Residue T252 is modified to Phosphothreonine; by CDK1. A Phosphothreonine modification is found at T356. T373 bears the Phosphothreonine; by CDK1 mark. The tract at residues 373 to 579 (TPVRTVMNTI…FDLIKQSKDR (207 aa)) is domain A. Residues 373–771 (TPVRTVMNTI…QRLKTNILQY (399 aa)) form a pocket; binds T and E1A region. At S567 the chain carries Phosphoserine; by CDK2. The tract at residues 580–639 (EGPTDHLESACPLNLPLQNNHTAADMYLSPVRSPKKKGSTTRVNSTANAETQATSAFQTQ) is spacer. The residue at position 608 (S608) is a Phosphoserine. Positions 610–632 (VRSPKKKGSTTRVNSTANAETQA) are disordered. The residue at position 612 (S612) is a Phosphoserine; by CHEK2 and CHEK1. The span at 619–632 (TTRVNSTANAETQA) shows a compositional bias: polar residues. Phosphoserine is present on S624. Positions 640–771 (KPLKSTSLSL…QRLKTNILQY (132 aa)) are domain B. The tract at residues 763–928 (RLKTNILQYA…SMDTSNKEEK (166 aa)) is interaction with LIMD1. Residues 771-928 (YASTRPPTLS…SMDTSNKEEK (158 aa)) are domain C; mediates interaction with E4F1. S780, S788, and S795 each carry phosphoserine. S807 carries the post-translational modification Phosphoserine; by CDK1 and CDK3. K810 carries the N6-methyllysine; by SMYD2 modification. Position 811 is a phosphoserine; by CDK1 and CDK3 (S811). The residue at position 821 (T821) is a Phosphothreonine; by CDK6. T823 carries the post-translational modification Phosphothreonine. T826 carries the post-translational modification Phosphothreonine; by CDK4. T841 is subject to Phosphothreonine. Residue S855 is modified to Phosphoserine. At K860 the chain carries N6-methyllysine; by SMYD2. The Bipartite nuclear localization signal motif lies at 860–876 (KRSAEGSNPPKPLKKLR). The interval 860–928 (KRSAEGSNPP…SMDTSNKEEK (69 aa)) is disordered. An N6-acetyllysine; by PCAF mark is found at K873 and K874. Residues 915 to 928 (KMNDSMDTSNKEEK) are compositionally biased toward basic and acidic residues.

Belongs to the retinoblastoma protein (RB) family. In terms of assembly, the hypophosphorylated form interacts with and sequesters the E2F1 transcription factor, thereby inhibiting E2F1 transcription. Interacts with heterodimeric E2F/DP transcription factor complexes containing TFDP1 and either E2F1, E2F3, E2F4 or E2F5, or TFDP2 and E2F4. Interacts (when hyperphosphorylated and hypophosphorylated) with PKP3; the interaction inhibits RB1 interaction with and repression of the transcription factor E2F1, potentially via sequestering RB1 to the cytoplasm. The unphosphorylated form interacts with EID1, ARID3B, KDM5A, SUV39H1, MJD2A/JHDM3A and THOC1. Interacts with the N-terminal domain of TAF1. Interacts with SNW1, ATAD5, AATF, DNMT1, LIN9, LMNA, KMT5B, KMT5C, PELP1, UHRF2 and TMPO-alpha. Interacts with GRIP1 and UBR4. Interacts with ARID4A and KDM5B. Interacts with E4F1 and LIMD1. Interacts with SMARCA4/BRG1 and HDAC1. Interacts with PSMA3 and USP4. Interacts (when methylated at Lys-860) with L3MBTL1. Interacts with CHEK2; phosphorylates RB1. Interacts with CDK1 and CDK2. Interacts with PRMT2. Interacts with CEBPA. P-TEFB complex interacts with RB1; promotes phosphorylation of RB1. Interacts with RBBP9; the interaction disrupts RB1 binding to E2F1. Interacts with KAT2B/PCAF and EP300/P300. Interacts with PAX5. Interacts (phosphorylated and unphosphorylated) with BLCAP. May interact with NDC80. As to quaternary structure, (Microbial infection) Interacts with adenovirus E1A protein. (Microbial infection) Interacts with HPV E7 protein. In terms of assembly, (Microbial infection) Interacts with SV40 large T antigen. As to quaternary structure, (Microbial infection) Interacts with human cytomegalovirus/HHV-5 proteins UL82 and UL123. (Microbial infection) Interacts with molluscum contagiosum virus protein MC007. In terms of processing, phosphorylated by CDK6 and CDK4, and subsequently by CDK2 at Ser-567 in G1, thereby releasing E2F1 which is then able to activate cell growth. Dephosphorylated at the late M phase. SV40 large T antigen, HPV E7 and adenovirus E1A bind to the underphosphorylated, active form of pRb. Phosphorylation at Thr-821 and Thr-826 promotes interaction between the C-terminal domain C and the Pocket domain, and thereby inhibits interactions with heterodimeric E2F/DP transcription factor complexes. Dephosphorylated at Ser-795 by calcineruin upon calcium stimulation. CDK3/cyclin-C-mediated phosphorylation at Ser-807 and Ser-811 is required for G0-G1 transition. Phosphorylated by CDK1 and CDK2 upon TGFB1-mediated apoptosis. Post-translationally, N-terminus is methylated by METTL11A/NTM1. Monomethylation at Lys-810 by SMYD2 enhances phosphorylation at Ser-807 and Ser-811, and promotes cell cycle progression. Monomethylation at Lys-860 by SMYD2 promotes interaction with L3MBTL1. Acetylated during keratinocyte differentiation. Acetylation at Lys-873 and Lys-874 regulates subcellular localization. Can be deacetylated by SIRT1. Expressed in the retina. Expressed in foreskin keratinocytes (at protein level).

The protein resides in the nucleus. Its subcellular location is the cytoplasm. Its function is as follows. Tumor suppressor that is a key regulator of the G1/S transition of the cell cycle. The hypophosphorylated form binds transcription regulators of the E2F family, preventing transcription of E2F-responsive genes. Both physically blocks E2Fs transactivating domain and recruits chromatin-modifying enzymes that actively repress transcription. Cyclin and CDK-dependent phosphorylation of RB1 induces its dissociation from E2Fs, thereby activating transcription of E2F responsive genes and triggering entry into S phase. RB1 also promotes the G0-G1 transition upon phosphorylation and activation by CDK3/cyclin-C. Directly involved in heterochromatin formation by maintaining overall chromatin structure and, in particular, that of constitutive heterochromatin by stabilizing histone methylation. Recruits and targets histone methyltransferases SUV39H1, KMT5B and KMT5C, leading to epigenetic transcriptional repression. Controls histone H4 'Lys-20' trimethylation. Inhibits the intrinsic kinase activity of TAF1. Mediates transcriptional repression by SMARCA4/BRG1 by recruiting a histone deacetylase (HDAC) complex to the c-FOS promoter. In resting neurons, transcription of the c-FOS promoter is inhibited by BRG1-dependent recruitment of a phospho-RB1-HDAC1 repressor complex. Upon calcium influx, RB1 is dephosphorylated by calcineurin, which leads to release of the repressor complex. Functionally, (Microbial infection) In case of viral infections, interactions with SV40 large T antigen, HPV E7 protein or adenovirus E1A protein induce the disassembly of RB1-E2F1 complex thereby disrupting RB1's activity. The polypeptide is Retinoblastoma-associated protein (RB1) (Homo sapiens (Human)).